The following is a 773-amino-acid chain: Probable C-mannosyltransferase DPY19L2 (773 aa).

Positions 1-45 are disordered; that stretch reads MVGPTRSKLREGSSDRPQSSCTGQARRRWSAATMEPQQERSAPQE. The Nuclear portion of the chain corresponds to 1-122; the sequence is MVGPTRSKLR…ALQMHRFSHR (122 aa). A helical transmembrane segment spans residues 123 to 143; it reads TLFGLAIFVGILHWLHLITLF. Topologically, residues 144–209 are perinuclear space; sequence ENDHHFSHLS…INTVKRFHLY (66 aa). The helical transmembrane segment at 210-230 threads the bilayer; sequence PEVVIAYWYRTIIGIMNLFGI. The Nuclear portion of the chain corresponds to 231 to 256; that stretch reads ETKTCWNVTRMEPLNEVQSCEGLGDP. The chain crosses the membrane as a helical span at residues 257–277; the sequence is ACFYIGVIFILNGLMMGLFFI. Over 278-311 the chain is Perinuclear space; it reads YSTYLSGSQLGGLITVACYFFNHGEATRVMWTPP. The helical transmembrane segment at 312-332 threads the bilayer; the sequence is LRESFSYPFLVLQMYILTIIL. Over 333 to 358 the chain is Nuclear; it reads RTSTVHKKHYMALCFSNVAFMLPWQF. The helical transmembrane segment at 359–379 threads the bilayer; sequence AQFILFTQIASLFPMYVVGYI. Residues 380-386 are Perinuclear space-facing; it reads EPSKFQK. A helical transmembrane segment spans residues 387 to 407; it reads IIYVNMSSVALCFILMFGNSM. Residues 408–437 are Nuclear-facing; it reads YLSSYYSSCLLVTWAIMQKKSKIQKLGGTE. The helical transmembrane segment at 438–458 threads the bilayer; the sequence is LQFWLIQGCFWWCGTIILKFL. At 459–507 the chain is on the perinuclear space side; sequence TSKICGVSDHIRLSDLIAARILRYTDFDTLIYTCAPEFDFMEQATPLRY. Residues 508–528 traverse the membrane as a helical segment; that stretch reads IKTLLLPLILVITYLIFKKIV. Residues 529-548 lie on the Nuclear side of the membrane; sequence RDIMCVLYTNTYVRKQLLDN. Residues 549 to 569 traverse the membrane as a helical segment; that stretch reads AELIFHTLQLLAFTGLAILIM. Topologically, residues 570-590 are perinuclear space; it reads RLKLFLTPHMCIMASLICSQR. A helical transmembrane segment spans residues 591-611; sequence LFGWLFCRIHFENVVFGILTM. The Nuclear segment spans residues 612–773; that stretch reads MSIQGCANLH…NSMYRVLKIN (162 aa).

It belongs to the dpy-19 family. As to quaternary structure, interacts with FAM209. As to expression, predominantly expressed in testis. Present in testis but absent from epididymal sperm (at protein level).

The protein resides in the nucleus inner membrane. Functionally, probable C-mannosyltransferase that mediates C-mannosylation of tryptophan residues on target proteins. Its function is as follows. Required during spermatogenesis for sperm head elongation and acrosome formation. Also plays a role in acrosome attachment to the nuclear envelope. The protein is Probable C-mannosyltransferase DPY19L2 (Dpy19l2) of Mus musculus (Mouse).